The chain runs to 1029 residues: Exportin-T (1029 aa).

Belongs to the exportin family.

It is found in the nucleus. The protein resides in the cytoplasm. In terms of biological role, tRNA nucleus export receptor which facilitates tRNA translocation across the nuclear pore complex. Involved in pre-tRNA splicing, probably by affecting the interaction of pre-tRNA with splicing endonuclease. The polypeptide is Exportin-T (los1) (Aspergillus clavatus (strain ATCC 1007 / CBS 513.65 / DSM 816 / NCTC 3887 / NRRL 1 / QM 1276 / 107)).